Consider the following 390-residue polypeptide: Transforming growth factor beta-1 proprotein (390 aa).

Positions 1 to 29 (MPPSGLRLLPLLLPLLWLLMLTPGRPVAG) are cleaved as a signal peptide. The straightjacket domain stretch occupies residues 30–74 (LSTCKTIDMELVKRKRIEAIRGQILSKLRLASPPSQGDVPPGPLP). Residues 75–271 (EAILALYNST…ATPLERAQHL (197 aa)) are arm domain. N-linked (GlcNAc...) asparagine glycosylation is found at Asn82, Asn136, and Asn176. Positions 226–252 (DSKDNTLQVDINGFSSGRRGDLATIHG) are bowtie tail. The Cell attachment site motif lies at 244 to 246 (RGD). 4 disulfide bridges follow: Cys285–Cys294, Cys293–Cys356, Cys322–Cys387, and Cys326–Cys389.

It belongs to the TGF-beta family. Homodimer; disulfide-linked. Interacts with the serine proteases, HTRA1 and HTRA3: the interaction with either inhibits TGFB1-mediated signaling and the HTRA protease activity is required for this inhibition. May interact with THSD4; this interaction may lead to sequestration by FBN1 microfibril assembly and attenuation of TGFB signaling. Interacts with CD109, DPT and ASPN. Interacts with EFEMP2. Interacts with TSKU; the interaction contributes to regulation of the hair cycle. Interacts with TGFBR3. As to quaternary structure, homodimer; disulfide-linked. Interacts with transforming growth factor beta-1 (TGF-beta-1) chain; interaction is non-covalent and maintains TGF-beta-1 in a latent state; each latency-associated peptide (LAP) monomer interacts with TGF-beta-1 in the other monomer. Interacts with LTBP1; leading to regulation of TGF-beta-1 activation. Interacts with LRRC32/GARP; leading to regulation of TGF-beta-1 activation on the surface of activated regulatory T-cells (Tregs). Interacts with LRRC33/NRROS; leading to regulation of TGF-beta-1 activation in macrophages and microglia. Interacts (via cell attachment site) with integrins ITGAV and ITGB6 (ITGAV:ITGB6), leading to release of the active TGF-beta-1. Interacts with NREP; the interaction results in a decrease in TGFB1 autoinduction. Interacts with HSP90AB1; inhibits latent TGFB1 activation. In terms of assembly, homodimer; disulfide-linked. Interacts with TGF-beta receptors (TGFBR1 and TGFBR2), leading to signal transduction. Interacts with EFEMP2. Post-translationally, transforming growth factor beta-1 proprotein: The precursor proprotein is cleaved in the Golgi apparatus by FURIN to form Transforming growth factor beta-1 (TGF-beta-1) and Latency-associated peptide (LAP) chains, which remain non-covalently linked, rendering TGF-beta-1 inactive. N-glycosylated. Deglycosylation leads to activation of Transforming growth factor beta-1 (TGF-beta-1); mechanisms triggering deglycosylation-driven activation of TGF-beta-1 are however unclear.

Its subcellular location is the secreted. It is found in the extracellular space. The protein localises to the extracellular matrix. Functionally, transforming growth factor beta-1 proprotein: Precursor of the Latency-associated peptide (LAP) and Transforming growth factor beta-1 (TGF-beta-1) chains, which constitute the regulatory and active subunit of TGF-beta-1, respectively. Required to maintain the Transforming growth factor beta-1 (TGF-beta-1) chain in a latent state during storage in extracellular matrix. Associates non-covalently with TGF-beta-1 and regulates its activation via interaction with 'milieu molecules', such as LTBP1, LRRC32/GARP and LRRC33/NRROS, that control activation of TGF-beta-1. Interaction with LRRC33/NRROS regulates activation of TGF-beta-1 in macrophages and microglia. Interaction with LRRC32/GARP controls activation of TGF-beta-1 on the surface of activated regulatory T-cells (Tregs). Interaction with integrins (ITGAV:ITGB6 or ITGAV:ITGB8) results in distortion of the Latency-associated peptide chain and subsequent release of the active TGF-beta-1. Its function is as follows. Multifunctional protein that regulates the growth and differentiation of various cell types and is involved in various processes, such as normal development, immune function, microglia function and responses to neurodegeneration. Activation into mature form follows different steps: following cleavage of the proprotein in the Golgi apparatus, Latency-associated peptide (LAP) and Transforming growth factor beta-1 (TGF-beta-1) chains remain non-covalently linked rendering TGF-beta-1 inactive during storage in extracellular matrix. At the same time, LAP chain interacts with 'milieu molecules', such as LTBP1, LRRC32/GARP and LRRC33/NRROS that control activation of TGF-beta-1 and maintain it in a latent state during storage in extracellular milieus. TGF-beta-1 is released from LAP by integrins (ITGAV:ITGB6 or ITGAV:ITGB8): integrin-binding to LAP stabilizes an alternative conformation of the LAP bowtie tail and results in distortion of the LAP chain and subsequent release of the active TGF-beta-1. Once activated following release of LAP, TGF-beta-1 acts by binding to TGF-beta receptors (TGFBR1 and TGFBR2), which transduce signal. While expressed by many cells types, TGF-beta-1 only has a very localized range of action within cell environment thanks to fine regulation of its activation by Latency-associated peptide chain (LAP) and 'milieu molecules'. Plays an important role in bone remodeling: acts as a potent stimulator of osteoblastic bone formation, causing chemotaxis, proliferation and differentiation in committed osteoblasts. Can promote either T-helper 17 cells (Th17) or regulatory T-cells (Treg) lineage differentiation in a concentration-dependent manner. At high concentrations, leads to FOXP3-mediated suppression of RORC and down-regulation of IL-17 expression, favoring Treg cell development. At low concentrations in concert with IL-6 and IL-21, leads to expression of the IL-17 and IL-23 receptors, favoring differentiation to Th17 cells. Stimulates sustained production of collagen through the activation of CREB3L1 by regulated intramembrane proteolysis (RIP). Mediates SMAD2/3 activation by inducing its phosphorylation and subsequent translocation to the nucleus. Positively regulates odontoblastic differentiation in dental papilla cells, via promotion of IPO7-mediated translocation of phosphorylated SMAD2 to the nucleus and subsequent transcription of target genes. Can induce epithelial-to-mesenchymal transition (EMT) and cell migration in various cell types. This is Transforming growth factor beta-1 proprotein (TGFB1) from Bos taurus (Bovine).